Consider the following 291-residue polypeptide: Pantothenate synthetase (291 aa).

30–37 serves as a coordination point for ATP; that stretch reads MGYLHVGH. Histidine 37 acts as the Proton donor in catalysis. Glutamine 61 is a binding site for (R)-pantoate. Residue glutamine 61 participates in beta-alanine binding. Residue 147–150 participates in ATP binding; it reads GEKD. Glutamine 153 is a binding site for (R)-pantoate. ATP-binding positions include valine 176 and 184–187; that span reads CSSR.

The protein belongs to the pantothenate synthetase family. As to quaternary structure, homodimer.

The protein resides in the cytoplasm. The catalysed reaction is (R)-pantoate + beta-alanine + ATP = (R)-pantothenate + AMP + diphosphate + H(+). It functions in the pathway cofactor biosynthesis; (R)-pantothenate biosynthesis; (R)-pantothenate from (R)-pantoate and beta-alanine: step 1/1. In terms of biological role, catalyzes the condensation of pantoate with beta-alanine in an ATP-dependent reaction via a pantoyl-adenylate intermediate. In Sinorhizobium medicae (strain WSM419) (Ensifer medicae), this protein is Pantothenate synthetase.